The following is a 273-amino-acid chain: 4-hydroxy-tetrahydrodipicolinate reductase (273 aa).

NAD(+) contacts are provided by residues 12–17 (GAGGRM) and glutamate 38. Arginine 39 contacts NADP(+). NAD(+) contacts are provided by residues 102-104 (GTT) and 126-129 (AANF). Histidine 159 functions as the Proton donor/acceptor in the catalytic mechanism. Histidine 160 provides a ligand contact to (S)-2,3,4,5-tetrahydrodipicolinate. Lysine 163 functions as the Proton donor in the catalytic mechanism. 169-170 (GT) lines the (S)-2,3,4,5-tetrahydrodipicolinate pocket.

The protein belongs to the DapB family. As to quaternary structure, homotetramer.

It is found in the cytoplasm. It carries out the reaction (S)-2,3,4,5-tetrahydrodipicolinate + NAD(+) + H2O = (2S,4S)-4-hydroxy-2,3,4,5-tetrahydrodipicolinate + NADH + H(+). It catalyses the reaction (S)-2,3,4,5-tetrahydrodipicolinate + NADP(+) + H2O = (2S,4S)-4-hydroxy-2,3,4,5-tetrahydrodipicolinate + NADPH + H(+). It participates in amino-acid biosynthesis; L-lysine biosynthesis via DAP pathway; (S)-tetrahydrodipicolinate from L-aspartate: step 4/4. Functionally, catalyzes the conversion of 4-hydroxy-tetrahydrodipicolinate (HTPA) to tetrahydrodipicolinate. In Escherichia fergusonii (strain ATCC 35469 / DSM 13698 / CCUG 18766 / IAM 14443 / JCM 21226 / LMG 7866 / NBRC 102419 / NCTC 12128 / CDC 0568-73), this protein is 4-hydroxy-tetrahydrodipicolinate reductase.